The sequence spans 1090 residues: UPF0507 protein SCRG_01893 (1090 aa).

One can recognise a VPS9 domain in the interval F289–N436.

It belongs to the UPF0507 family.

The protein is UPF0507 protein SCRG_01893 of Saccharomyces cerevisiae (strain RM11-1a) (Baker's yeast).